The following is a 297-amino-acid chain: Formamidopyrimidine-DNA glycosylase (297 aa).

Residue Pro2 is the Schiff-base intermediate with DNA of the active site. Glu3 functions as the Proton donor in the catalytic mechanism. Lys58 (proton donor; for beta-elimination activity) is an active-site residue. The DNA site is built by His106, Arg125, and Arg168. The FPG-type zinc-finger motif lies at 259 to 295; sequence RVYDREGLACTARGCRGVVRRVVQSGRSTFFCEVCQP. Residue Arg285 is the Proton donor; for delta-elimination activity of the active site.

The protein belongs to the FPG family. In terms of assembly, monomer. Zn(2+) is required as a cofactor.

It catalyses the reaction Hydrolysis of DNA containing ring-opened 7-methylguanine residues, releasing 2,6-diamino-4-hydroxy-5-(N-methyl)formamidopyrimidine.. It carries out the reaction 2'-deoxyribonucleotide-(2'-deoxyribose 5'-phosphate)-2'-deoxyribonucleotide-DNA = a 3'-end 2'-deoxyribonucleotide-(2,3-dehydro-2,3-deoxyribose 5'-phosphate)-DNA + a 5'-end 5'-phospho-2'-deoxyribonucleoside-DNA + H(+). Its function is as follows. Involved in base excision repair of DNA damaged by oxidation or by mutagenic agents. Acts as a DNA glycosylase that recognizes and removes damaged bases. Has a preference for oxidized purines, such as 7,8-dihydro-8-oxoguanine (8-oxoG). Has AP (apurinic/apyrimidinic) lyase activity and introduces nicks in the DNA strand. Cleaves the DNA backbone by beta-delta elimination to generate a single-strand break at the site of the removed base with both 3'- and 5'-phosphates. The chain is Formamidopyrimidine-DNA glycosylase from Methylobacterium nodulans (strain LMG 21967 / CNCM I-2342 / ORS 2060).